Reading from the N-terminus, the 520-residue chain is Na(+)/H(+) antiporter NhaB (520 aa).

The next 12 helical transmembrane spans lie at 27-49 (GFLILNPLVFWVSPFTAGWLLVI), 62-82 (YPLLPGGLLAVEALFIGMTSA), 97-117 (LLLIFMVAGIYFMKQLLLLIF), 120-140 (LLLGIRSKTLLSLAFCFAAAF), 144-164 (FLDALTVVAVVISVAVGFYGI), 202-222 (LMMHAGVGTALGGVMTMVGEP), 238-258 (FLLRVAPVSVPVFICGIVTCI), 303-323 (GLIGVWLITALALHLAEVGLI), 348-368 (TEALPFTALLTVFFAVVAVII), 391-411 (LFYLFNGLLSSISDNVFVGTV), 447-467 (ATPNGQAAFLFLLTSALAPLI), and 475-495 (VWMALPYTIVLTLVGLACVQF).

It belongs to the NhaB Na(+)/H(+) (TC 2.A.34) antiporter family.

The protein localises to the cell inner membrane. The enzyme catalyses 2 Na(+)(in) + 3 H(+)(out) = 2 Na(+)(out) + 3 H(+)(in). In terms of biological role, na(+)/H(+) antiporter that extrudes sodium in exchange for external protons. The chain is Na(+)/H(+) antiporter NhaB from Cronobacter sakazakii (strain ATCC BAA-894) (Enterobacter sakazakii).